A 142-amino-acid chain; its full sequence is Hemoglobin larval subunit alpha (142 aa).

Residues 2–142 (VLSAEEKALV…VSAVLTSKYR (141 aa)) form the Globin domain. Residue histidine 59 coordinates O2. Histidine 88 contributes to the heme b binding site.

Belongs to the globin family. Heterotetramer of two alpha chains and two beta chains. As to expression, red blood cells.

Functionally, involved in oxygen transport from the lung to the various peripheral tissues. The protein is Hemoglobin larval subunit alpha of Pleurodeles waltl (Iberian ribbed newt).